Consider the following 257-residue polypeptide: MEFPDLGAHCSEPSCQRLDFLPLKCDACSGIFCADHVAYAHHHCGSAYQKDIQVPVCPLCNVPVPVARGEPPDRAVGEHIDRDCRSDPAQQKRKIFTNKCERSGCRQREMMKLTCDRCGRNFCIKHRHPLDHDCSGEGHPTSRAGLAAISRAQGLASTSTVPSPSRTLPSSSSPSRATPQLPPRTTSPVIALQNGLSEDEALQRALELSLAEAKPQIPSSQEEEDLALAQALSASEAEYQQQQAQSRSLKPSNCSLC.

2 AN1-type zinc fingers span residues 4 to 52 (PDLG…QKDI) and 94 to 142 (KIFT…HPTS). Zn(2+) is bound by residues Cys-10, Cys-15, Cys-25, Cys-28, Cys-33, His-36, His-42, Cys-44, Cys-100, Cys-105, Cys-115, Cys-118, Cys-123, His-126, His-132, and Cys-134. The interval 141 to 151 (TSRAGLAAISR) is VCP/p97-interacting motif (VIM). Residues 153–187 (QGLASTSTVPSPSRTLPSSSSPSRATPQLPPRTTS) are disordered. Residues 156 to 179 (ASTSTVPSPSRTLPSSSSPSRATP) show a composition bias toward low complexity. Residues Ser-163, Ser-173, and Ser-187 each carry the phosphoserine modification. UIM domains follow at residues 197–216 (SEDE…AKPQ) and 221–240 (QEEE…AEYQ). The residue at position 254 (Cys-254) is a Cysteine methyl ester. Cys-254 carries the S-geranylgeranyl cysteine lipid modification. The CAAX motif signature appears at 254–257 (CSLC). The propeptide at 255 to 257 (SLC) is removed in mature form.

Binds 'Lys-48'-linked polyubiquitin chains of ubiquitinated proteins. Associates with the proteasome complex; upon exposure to arsenite. Interacts (via VIM motif) with VCP; the interaction is direct. Interacts with BAG6. Interacts with IGF1R (nascent precursor form). Interacts with DERL1, FAF2, NPLOC4 and UFD1; probably through VCP. Post-translationally, phosphorylated by MAPK14. Phosphorylation has no effect on association with the proteasome complex.

Its subcellular location is the endoplasmic reticulum membrane. Plays a role in protein homeostasis by regulating both the translocation and the ubiquitin-mediated proteasomal degradation of nascent proteins at the endoplasmic reticulum. It is involved in the regulation of signal-mediated translocation of proteins into the endoplasmic reticulum. It also plays a role in the ubiquitin-mediated proteasomal degradation of proteins for which signal-mediated translocation to the endoplasmic reticulum has failed. May therefore function in the endoplasmic reticulum stress-induced pre-emptive quality control, a mechanism that selectively attenuates the translocation of newly synthesized proteins into the endoplasmic reticulum and reroutes them to the cytosol for proteasomal degradation. By controlling the steady-state expression of the IGF1R receptor, indirectly regulates the insulin-like growth factor receptor signaling pathway. In Rattus norvegicus (Rat), this protein is AN1-type zinc finger protein 2B.